The primary structure comprises 320 residues: (+)-corvol ether B synthase/(+)-corvol ether A synthase ((2E,6E)-farnesyl diphosphate cyclizing) (320 aa).

2 residues coordinate Mg(2+): D78 and D83. The DDXXXD motif signature appears at 78-83 (DDLFVD). R171 serves as a coordination point for substrate. Positions 217, 221, and 225 each coordinate Mg(2+).

The protein belongs to the terpene synthase family. Requires Mg(2+) as cofactor.

It carries out the reaction (2E,6E)-farnesyl diphosphate + H2O = (+)-corvol ether B + diphosphate. It catalyses the reaction (2E,6E)-farnesyl diphosphate + H2O = (+)-corvol ether A + diphosphate. The protein operates within secondary metabolite biosynthesis; terpenoid biosynthesis. Catalyzes the conversion of (2E,6E)-farnesyl diphosphate (FPP) into (+)-corvol ether A and (+)-corvol ether B via a 1,10-cyclization, which requires isomerization of FPP to nerolidyl diphosphate (NPP) and then abstraction of the pyrophosphate from intermediate NPP leading to a (E,Z)-germacradienyl (helminthogermacradienyl) cation. The preferred substrate is (2E,6E)-farnesyl diphosphate (FPP), however geranyl diphosphate (GPP) is also able to produce small amounts of several acyclic and cyclic monoterpenes, with linalool as the main product. This Kitasatospora setae (strain ATCC 33774 / DSM 43861 / JCM 3304 / KCC A-0304 / NBRC 14216 / KM-6054) (Streptomyces setae) protein is (+)-corvol ether B synthase/(+)-corvol ether A synthase ((2E,6E)-farnesyl diphosphate cyclizing).